The primary structure comprises 189 residues: Cold-regulated 413 plasma membrane protein 3 (189 aa).

The Extracellular segment spans residues 1–24 (MENIEYLNEIQAVAGKLIHSYGVP). A helical transmembrane segment spans residues 25–45 (VMITLFLRWLASIVAVFLMIL). Over 46 to 55 (DQTKWKYSNN) the chain is Cytoplasmic. A helical transmembrane segment spans residues 56–76 (IMASLLAPYLFSSLPIVIFQV). The Extracellular portion of the chain corresponds to 77-79 (LRN). A helical transmembrane segment spans residues 80 to 100 (GVGKWIALLTVILRLFLPNHF). The Cytoplasmic segment spans residues 101–104 (HESL). A helical membrane pass occupies residues 105 to 125 (EIPGATILLIVVTPSDIGAIF). The Extracellular segment spans residues 126–168 (RDDLRYTGGDVCLLTSFYLINKHTKACGGIKNSFTQKDKVTYS). The helical transmembrane segment at 169-189 (ICLWILFVYPILSSFAALFYL) threads the bilayer.

Belongs to the Cold-regulated 413 protein family.

Its subcellular location is the cell membrane. This chain is Cold-regulated 413 plasma membrane protein 3, found in Arabidopsis thaliana (Mouse-ear cress).